A 1357-amino-acid polypeptide reads, in one-letter code: DNA-directed RNA polymerase subunit beta (1357 aa).

The protein belongs to the RNA polymerase beta chain family. As to quaternary structure, the RNAP catalytic core consists of 2 alpha, 1 beta, 1 beta' and 1 omega subunit. When a sigma factor is associated with the core the holoenzyme is formed, which can initiate transcription.

The enzyme catalyses RNA(n) + a ribonucleoside 5'-triphosphate = RNA(n+1) + diphosphate. Functionally, DNA-dependent RNA polymerase catalyzes the transcription of DNA into RNA using the four ribonucleoside triphosphates as substrates. The chain is DNA-directed RNA polymerase subunit beta from Pseudomonas syringae pv. syringae (strain B728a).